Consider the following 354-residue polypeptide: Uroporphyrinogen decarboxylase (354 aa).

Residues Arg27–Arg31, Phe46, Asp77, Tyr154, Thr209, and His327 each bind substrate.

It belongs to the uroporphyrinogen decarboxylase family. Homodimer.

It is found in the cytoplasm. The catalysed reaction is uroporphyrinogen III + 4 H(+) = coproporphyrinogen III + 4 CO2. The protein operates within porphyrin-containing compound metabolism; protoporphyrin-IX biosynthesis; coproporphyrinogen-III from 5-aminolevulinate: step 4/4. In terms of biological role, catalyzes the decarboxylation of four acetate groups of uroporphyrinogen-III to yield coproporphyrinogen-III. The sequence is that of Uroporphyrinogen decarboxylase from Photorhabdus laumondii subsp. laumondii (strain DSM 15139 / CIP 105565 / TT01) (Photorhabdus luminescens subsp. laumondii).